The chain runs to 388 residues: GTPase Obg (388 aa).

Residues 4–162 form the Obg domain; it reads SNFVDYVKIY…MTVILELKLL (159 aa). A disordered region spans residues 18 to 45; that stretch reads KGGRGSTHMRREKYTPNGGPDGGDGGRG. A compositionally biased stretch (gly residues) spans 36–45; that stretch reads GPDGGDGGRG. An OBG-type G domain is found at 163 to 329; the sequence is ADVGLVGFPN…LKDILWTELN (167 aa). Residues 169-176, 194-198, 216-219, 283-286, and 310-312 each bind GTP; these read GFPNAGKS, FTTLE, DIPG, TKSD, and SSV. The Mg(2+) site is built by Ser-176 and Thr-196. Positions 352-388 are disordered; the sequence is LKDMGEDEELDYEYEDDGDGDEDDLDYEYEEEDWEDK. The span at 356-388 shows a compositional bias: acidic residues; the sequence is GEDEELDYEYEDDGDGDEDDLDYEYEEEDWEDK.

Belongs to the TRAFAC class OBG-HflX-like GTPase superfamily. OBG GTPase family. Monomer. It depends on Mg(2+) as a cofactor.

The protein resides in the cytoplasm. Its function is as follows. An essential GTPase which binds GTP, GDP and possibly (p)ppGpp with moderate affinity, with high nucleotide exchange rates and a fairly low GTP hydrolysis rate. Plays a role in control of the cell cycle, stress response, ribosome biogenesis and in those bacteria that undergo differentiation, in morphogenesis control. This Bacteroides fragilis (strain ATCC 25285 / DSM 2151 / CCUG 4856 / JCM 11019 / LMG 10263 / NCTC 9343 / Onslow / VPI 2553 / EN-2) protein is GTPase Obg.